We begin with the raw amino-acid sequence, 655 residues long: Mannosyl-oligosaccharide 1,2-alpha-mannosidase IA (655 aa).

The Cytoplasmic portion of the chain corresponds to 1–43 (MPVGGLLPLFSSPGGGGLGSGLGGGLGGGRKGSGPAAFRLTEK). Residues 44–64 (FVLLLVFSAFITLCFGAIFFL) traverse the membrane as a helical; Signal-anchor for type II membrane protein segment. Residues 65-655 (PDSSKLLSGV…QKKEIDGKEK (591 aa)) lie on the Lumenal side of the membrane. A disulfide bond links C478 and C510. N515 carries N-linked (GlcNAc...) asparagine glycosylation. E524 functions as the Proton donor in the catalytic mechanism. T635 contacts Ca(2+).

The protein belongs to the glycosyl hydrolase 47 family. Ca(2+) is required as a cofactor. Post-translationally, N-linked glycan at Asn-515 consists of Man(6)-GlcNAc(2).

It is found in the golgi apparatus membrane. The catalysed reaction is N(4)-(alpha-D-Man-(1-&gt;2)-alpha-D-Man-(1-&gt;2)-alpha-D-Man-(1-&gt;3)-[alpha-D-Man-(1-&gt;2)-alpha-D-Man-(1-&gt;3)-[alpha-D-Man-(1-&gt;2)-alpha-D-Man-(1-&gt;6)]-alpha-D-Man-(1-&gt;6)]-beta-D-Man-(1-&gt;4)-beta-D-GlcNAc-(1-&gt;4)-beta-D-GlcNAc)-L-asparaginyl-[protein] (N-glucan mannose isomer 9A1,2,3B1,2,3) + 4 H2O = N(4)-(alpha-D-Man-(1-&gt;3)-[alpha-D-Man-(1-&gt;3)-[alpha-D-Man-(1-&gt;6)]-alpha-D-Man-(1-&gt;6)]-beta-D-Man-(1-&gt;4)-beta-D-GlcNAc-(1-&gt;4)-beta-D-GlcNAc)-L-asparaginyl-[protein] (N-glucan mannose isomer 5A1,2) + 4 beta-D-mannose. It carries out the reaction N(4)-(alpha-D-Man-(1-&gt;2)-alpha-D-Man-(1-&gt;2)-alpha-D-Man-(1-&gt;3)-[alpha-D-Man-(1-&gt;3)-[alpha-D-Man-(1-&gt;2)-alpha-D-Man-(1-&gt;6)]-alpha-D-Man-(1-&gt;6)]-beta-D-Man-(1-&gt;4)-beta-D-GlcNAc-(1-&gt;4)-beta-D-GlcNAc)-L-asparaginyl-[protein] (N-glucan mannose isomer 8A1,2,3B1,3) + 3 H2O = N(4)-(alpha-D-Man-(1-&gt;3)-[alpha-D-Man-(1-&gt;3)-[alpha-D-Man-(1-&gt;6)]-alpha-D-Man-(1-&gt;6)]-beta-D-Man-(1-&gt;4)-beta-D-GlcNAc-(1-&gt;4)-beta-D-GlcNAc)-L-asparaginyl-[protein] (N-glucan mannose isomer 5A1,2) + 3 beta-D-mannose. The protein operates within protein modification; protein glycosylation. With respect to regulation, inhibited by both 1-deoxymannojirimycin and kifunensine. Functionally, involved in the maturation of Asn-linked oligosaccharides. Progressively trim alpha-1,2-linked mannose residues from Man(9)GlcNAc(2) to produce Man(5)GlcNAc(2). This Mus musculus (Mouse) protein is Mannosyl-oligosaccharide 1,2-alpha-mannosidase IA (Man1a1).